A 680-amino-acid polypeptide reads, in one-letter code: Transketolase 1 (680 aa).

Position 30 (H30) interacts with substrate. Thiamine diphosphate is bound by residues H69 and 116-118 (GPL). Mg(2+) is bound at residue D157. Residues G158 and N187 each coordinate thiamine diphosphate. Mg(2+)-binding residues include N187 and I189. H263 is a substrate binding site. H263 serves as a coordination point for thiamine diphosphate. Phosphoserine occurs at positions 286 and 335. Residues R359 and S386 each contribute to the substrate site. S402 is subject to Phosphoserine. Thiamine diphosphate is bound by residues E418 and F445. E418 (proton donor) is an active-site residue. Residues H469 and D477 each coordinate substrate. S492 is subject to Phosphoserine. Substrate is bound at residue R528. K647 is covalently cross-linked (Glycyl lysine isopeptide (Lys-Gly) (interchain with G-Cter in ubiquitin)).

Belongs to the transketolase family. Homodimer. Requires Mg(2+) as cofactor. Ca(2+) serves as cofactor. The cofactor is Mn(2+). Co(2+) is required as a cofactor. It depends on thiamine diphosphate as a cofactor.

The catalysed reaction is D-sedoheptulose 7-phosphate + D-glyceraldehyde 3-phosphate = aldehydo-D-ribose 5-phosphate + D-xylulose 5-phosphate. Functionally, catalyzes the transfer of a two-carbon ketol group from a ketose donor to an aldose acceptor, via a covalent intermediate with the cofactor thiamine pyrophosphate. The polypeptide is Transketolase 1 (TKL1) (Saccharomyces cerevisiae (strain ATCC 204508 / S288c) (Baker's yeast)).